We begin with the raw amino-acid sequence, 548 residues long: Eukaryotic translation initiation factor 3 subunit D (548 aa).

K53 bears the N6-acetyllysine mark. Residue S161 is modified to Phosphoserine. Residues 285-299 (DFDLLTVSETANEPP) form an RNA gate region. Residues 523 to 548 (PDGTFSSDEDDEEEEEEEEEEEEEEA) are disordered. A phosphoserine mark is found at S528 and S529. Acidic residues predominate over residues 529-548 (SDEDDEEEEEEEEEEEEEEA).

It belongs to the eIF-3 subunit D family. Component of the eukaryotic translation initiation factor 3 (eIF-3) complex, which is composed of 13 subunits: EIF3A, EIF3B, EIF3C, EIF3D, EIF3E, EIF3F, EIF3G, EIF3H, EIF3I, EIF3J, EIF3K, EIF3L and EIF3M. The eIF-3 complex appears to include 3 stable modules: module A is composed of EIF3A, EIF3B, EIF3G and EIF3I; module B is composed of EIF3F, EIF3H, and EIF3M; and module C is composed of EIF3C, EIF3D, EIF3E, EIF3K and EIF3L. EIF3C of module C binds EIF3B of module A and EIF3H of module B, thereby linking the three modules. EIF3J is a labile subunit that binds to the eIF-3 complex via EIF3B. The eIF-3 complex interacts with RPS6KB1 under conditions of nutrient depletion. Mitogenic stimulation leads to binding and activation of a complex composed of MTOR and RPTOR, leading to phosphorylation and release of RPS6KB1 and binding of EIF4B to eIF-3.

It localises to the cytoplasm. Functionally, mRNA cap-binding component of the eukaryotic translation initiation factor 3 (eIF-3) complex, a complex required for several steps in the initiation of protein synthesis of a specialized repertoire of mRNAs. The eIF-3 complex associates with the 40S ribosome and facilitates the recruitment of eIF-1, eIF-1A, eIF-2:GTP:methionyl-tRNAi and eIF-5 to form the 43S pre-initiation complex (43S PIC). The eIF-3 complex stimulates mRNA recruitment to the 43S PIC and scanning of the mRNA for AUG recognition. The eIF-3 complex is also required for disassembly and recycling of post-termination ribosomal complexes and subsequently prevents premature joining of the 40S and 60S ribosomal subunits prior to initiation. The eIF-3 complex specifically targets and initiates translation of a subset of mRNAs involved in cell proliferation, including cell cycling, differentiation and apoptosis, and uses different modes of RNA stem-loop binding to exert either translational activation or repression. In the eIF-3 complex, EIF3D specifically recognizes and binds the 7-methylguanosine cap of a subset of mRNAs. The chain is Eukaryotic translation initiation factor 3 subunit D from Bos taurus (Bovine).